The chain runs to 45 residues: METALLLAKLPEAYQIFDPLVDVLPLIPLFFLLLAFVWQASVGFK.

Positions 1 to 8 are excised as a propeptide; it reads METALLLA. Residues 24 to 44 traverse the membrane as a helical segment; sequence LPLIPLFFLLLAFVWQASVGF.

The protein belongs to the PsbK family. PSII is composed of 1 copy each of membrane proteins PsbA, PsbB, PsbC, PsbD, PsbE, PsbF, PsbH, PsbI, PsbJ, PsbK, PsbL, PsbM, PsbT, PsbX, PsbY, PsbZ, Psb30/Ycf12, peripheral proteins PsbO, CyanoQ (PsbQ), PsbU, PsbV and a large number of cofactors. It forms dimeric complexes.

It localises to the cellular thylakoid membrane. Its function is as follows. One of the components of the core complex of photosystem II (PSII). PSII is a light-driven water:plastoquinone oxidoreductase that uses light energy to abstract electrons from H(2)O, generating O(2) and a proton gradient subsequently used for ATP formation. It consists of a core antenna complex that captures photons, and an electron transfer chain that converts photonic excitation into a charge separation. The chain is Photosystem II reaction center protein K from Microcystis aeruginosa (strain NIES-843 / IAM M-2473).